The sequence spans 543 residues: Glucose-6-phosphate isomerase (543 aa).

Glu353 functions as the Proton donor in the catalytic mechanism. Active-site residues include His384 and Lys504.

This sequence belongs to the GPI family.

It is found in the cytoplasm. The enzyme catalyses alpha-D-glucose 6-phosphate = beta-D-fructose 6-phosphate. Its pathway is carbohydrate biosynthesis; gluconeogenesis. It functions in the pathway carbohydrate degradation; glycolysis; D-glyceraldehyde 3-phosphate and glycerone phosphate from D-glucose: step 2/4. Its function is as follows. Catalyzes the reversible isomerization of glucose-6-phosphate to fructose-6-phosphate. This Roseiflexus castenholzii (strain DSM 13941 / HLO8) protein is Glucose-6-phosphate isomerase.